A 272-amino-acid chain; its full sequence is Indole-3-glycerol phosphate synthase (272 aa).

Belongs to the TrpC family.

The catalysed reaction is 1-(2-carboxyphenylamino)-1-deoxy-D-ribulose 5-phosphate + H(+) = (1S,2R)-1-C-(indol-3-yl)glycerol 3-phosphate + CO2 + H2O. The protein operates within amino-acid biosynthesis; L-tryptophan biosynthesis; L-tryptophan from chorismate: step 4/5. This Mycobacterium tuberculosis (strain ATCC 25177 / H37Ra) protein is Indole-3-glycerol phosphate synthase.